The chain runs to 330 residues: Aspartate--ammonia ligase (330 aa).

It belongs to the class-II aminoacyl-tRNA synthetase family. AsnA subfamily.

It localises to the cytoplasm. The enzyme catalyses L-aspartate + NH4(+) + ATP = L-asparagine + AMP + diphosphate + H(+). It participates in amino-acid biosynthesis; L-asparagine biosynthesis; L-asparagine from L-aspartate (ammonia route): step 1/1. This is Aspartate--ammonia ligase from Streptococcus agalactiae serotype III (strain NEM316).